Reading from the N-terminus, the 673-residue chain is MGAWKVWTFFAIALVVAVKAYDEEAKCMSHDEDSQVKERQILHIVDSINKPISPDFRAPRGVIDEHKLRGLGTLKKREIFSLFDERNWDEASKVVRLLLDAKDFDDFIDVAEVIRLRVNEELFLYAFSVAVMHRGDTQGLQVPRIHDIFPDKFLKEDVIHRLLELSNRGEHYDRIPIIDATQISHNYLDPNSELEYFLEDLGLNSHHHHWHVIHPAIWVSELGNEKDRKGEFFYWMHHQMLARYEAERMSNGLARTRTFQNWNDPIDEGYAPHISIMKTGYTYAYRPPGYTLRDLPNLPKNKMVEWAKRVLYSIHSGIFHFSNGTDAHLDTEHGIDELGNIVESSLTSLNRDYYGNLHCYAHVIAGRIADPEGKYGEDNGVMYDVATSARDPLFYRWHKYIDNIFQEYKNTLPPYTTEELTPQNSEFRVQGISVVGETSARDTVHTYWQHSLLKVGQGFEFTKHTPAYVKVKHLQHESFTYVIDVENRGRTRTGFFRIFAAPKYNELGQKWHINDQRLIMVEMDKFIEKLYPGKNTIERHSEDSTVTMSSASIFSDISSEQSEDHCSCGWPDYLLVPKGNFEGFPMEVFVIVTDYEEDKVEGPDEGCACHDALTYCGGIDYHFPDKRAMGFPFDRPIKQRNFNAFKTKNMGKVTVDVKFTGETIAPEDFHNQH.

A signal peptide spans 1 to 20 (MGAWKVWTFFAIALVVAVKA). 3 residues coordinate Cu cation: His207, His211, and His237. N-linked (GlcNAc...) asparagine glycosylation is present at Asn323. Residues His358, His362, and His398 each contribute to the Cu cation site. Cysteines 568 and 616 form a disulfide.

This sequence belongs to the tyrosinase family. Hemocyanin subfamily. In terms of assembly, 36-chain polymer consisting of 6 hexamers, each of which includes 4 different chains, A, B, C and D. Hemolymph.

The protein localises to the secreted. Its subcellular location is the extracellular space. Its function is as follows. Hemocyanins are copper-containing oxygen carriers occurring freely dissolved in the hemolymph of many mollusks and arthropods. This is Hemocyanin subunit C (HCC) from Scutigera coleoptrata (House centipede).